We begin with the raw amino-acid sequence, 772 residues long: Carnitine O-palmitoyltransferase 1, muscle isoform (772 aa).

Residues 1–47 (MAEAHQAVAFQFTVTPDGVDFRLSREALRHIYLSGINSWKKRLIRIK) lie on the Cytoplasmic side of the membrane. Residues 48-73 (NGILRGVYPGSPTSWLVVVMATVGSN) form a helical membrane-spanning segment. Over 74–102 (YCKVDISMGLVHCIQRCLPTRYGSYGTPQ) the chain is Mitochondrial intermembrane. Residues 103-122 (TETLLSMVIFSTGVWATGIF) traverse the membrane as a helical segment. Residues 123–772 (LFRQTLKLLL…DLFKISKTDS (650 aa)) are Cytoplasmic-facing. H473 serves as the catalytic Proton acceptor. CoA is bound at residue 555 to 567 (GKGLIKKCRTSPD). Positions 589 and 602 each coordinate (R)-carnitine.

The protein belongs to the carnitine/choline acetyltransferase family. As to expression, high expression in heart, skeletal muscle and brown adipose tissue. Also expressed in white adipose tissue, but not in liver.

It is found in the mitochondrion outer membrane. The catalysed reaction is (R)-carnitine + hexadecanoyl-CoA = O-hexadecanoyl-(R)-carnitine + CoA. The protein operates within lipid metabolism; fatty acid beta-oxidation. Its function is as follows. Catalyzes the transfer of the acyl group of long-chain fatty acid-CoA conjugates onto carnitine, an essential step for the mitochondrial uptake of long-chain fatty acids and their subsequent beta-oxidation in the mitochondrion. The protein is Carnitine O-palmitoyltransferase 1, muscle isoform (Cpt1b) of Rattus norvegicus (Rat).